A 72-amino-acid polypeptide reads, in one-letter code: Translation initiation factor IF-1 (72 aa).

Residues 1 to 72 form the S1-like domain; the sequence is MSKEDVIEVE…SRGRIVYRFK (72 aa).

Belongs to the IF-1 family. In terms of assembly, component of the 30S ribosomal translation pre-initiation complex which assembles on the 30S ribosome in the order IF-2 and IF-3, IF-1 and N-formylmethionyl-tRNA(fMet); mRNA recruitment can occur at any time during PIC assembly.

It localises to the cytoplasm. One of the essential components for the initiation of protein synthesis. Stabilizes the binding of IF-2 and IF-3 on the 30S subunit to which N-formylmethionyl-tRNA(fMet) subsequently binds. Helps modulate mRNA selection, yielding the 30S pre-initiation complex (PIC). Upon addition of the 50S ribosomal subunit IF-1, IF-2 and IF-3 are released leaving the mature 70S translation initiation complex. The sequence is that of Translation initiation factor IF-1 from Desulfitobacterium hafniense (strain Y51).